A 976-amino-acid chain; its full sequence is LRR receptor-like serine/threonine-protein kinase ERECTA (976 aa).

The first 24 residues, methionine 1–serine 24, serve as a signal peptide directing secretion. At glutamate 25–arginine 580 the chain is on the extracellular side. N-linked (GlcNAc...) asparagine glycosylation is found at asparagine 65 and asparagine 74. LRR repeat units lie at residues asparagine 69–lysine 92, serine 93–cysteine 115, serine 117–lysine 140, glutamine 141–isoleucine 163, asparagine 165–asparagine 187, valine 189–threonine 212, glycine 213–cysteine 235, alanine 237–leucine 259, glutamine 260–methionine 282, alanine 284–leucine 306, phenylalanine 308–methionine 330, lysine 332–threonine 355, aspartate 356–threonine 379, asparagine 380–lysine 401, serine 404–arginine 425, asparagine 428–aspartate 449, histidine 452–asparagine 473, serine 476–leucine 498, asparagine 500–leucine 522, and serine 523–serine 545. Asparagine 221 and asparagine 234 each carry an N-linked (GlcNAc...) asparagine glycan. N-linked (GlcNAc...) asparagine glycans are attached at residues asparagine 305 and asparagine 329. Asparagine 409 carries N-linked (GlcNAc...) asparagine glycosylation. A glycan (N-linked (GlcNAc...) asparagine) is linked at asparagine 457. 3 N-linked (GlcNAc...) asparagine glycosylation sites follow: asparagine 510, asparagine 528, and asparagine 543. A helical transmembrane segment spans residues alanine 581–alanine 601. At cysteine 602–glutamate 976 the chain is on the cytoplasmic side. Threonine 645 carries the post-translational modification Phosphothreonine. Residues leucine 648 to methionine 918 form the Protein kinase domain. Residues isoleucine 654–valine 662 and lysine 676 each bind ATP. Phosphotyrosine occurs at positions 721 and 760. The active-site Proton acceptor is the aspartate 773. A Phosphotyrosine modification is found at tyrosine 815. Threonine 823 is subject to Phosphothreonine.

This sequence belongs to the protein kinase superfamily. Ser/Thr protein kinase family. As to quaternary structure, homodimer and heterodimer with ERL1 and TMM. Interacts with EPF1, EPF2, EPFL4, EPFL5 and EPFL6. Interacts with SERK1, SERK2, SERK3/BAK1 and SERK4 in a EPF2-induced manner. Interacts with EPFL9/STOMAGEN. As to expression, mostly expressed in shoot apical meristems (SAM), organ primordia, flowers, siliques and young rosette leaves, and, to a lower extent, in stems and cauline leaves. Expressed in growing inflorescence stems and pedicels. Detected in epidermis, phloem and xylem.

The protein localises to the cell membrane. The enzyme catalyses L-seryl-[protein] + ATP = O-phospho-L-seryl-[protein] + ADP + H(+). It catalyses the reaction L-threonyl-[protein] + ATP = O-phospho-L-threonyl-[protein] + ADP + H(+). In terms of biological role, receptor kinase that, together with ERL1 and ERL2, regulates aerial architecture, including inflorescence (e.g. shoot apical meristem-originating organ shape, elongation of the internode and pedicels, and adaxial-abaxial polarity), and stomatal patterning (e.g. density and clustering), probably by tuning cell division and expansion. Redundantly involved with ERL1 in procambial development regulation. Forms a functional ligand-receptor pair with EPF2 (AC Q8LC53). Modulates plant transpiration efficiency by controlling stomatal density, leaf photosynthetic capacity, epidermal cell expansion, mesophyll cell proliferation and cell-cell contact. A phloem-specific expression of ER is sufficient for proper inflorescence architecture. Probable major trait regulating canalization (maintenance of phenotype despite varying environment) in many aspect of the plant physiology (e.g. plant morphology, light-dependent leaves number, branch number, flowering time, phytate and mineral concentrations) by transducing microenvironmental variation into phenotypic differentiation (ecological amplifier). May maintain development integrity in heat stress conditions. Regulates cell wall composition and structure. Confers resistance to the pathogenic bacteria Ralstonia solanacearum and to the necrotrophic fungi Plectosphaerella cucumerina and Pythium irregulare, and required for callose deposition upon infection. Resistance to P.cucumerina seems cell wall-mediated. Forms a constitutive complex with TMM involved in the recognition of the stomatal regulatory peptides EPF1, EPF2 and EPFL9/STOMAGEN. The protein is LRR receptor-like serine/threonine-protein kinase ERECTA of Arabidopsis thaliana (Mouse-ear cress).